Consider the following 276-residue polypeptide: Sulfur carrier protein FdhD (276 aa).

The active-site Cysteine persulfide intermediate is the Cys-120.

It belongs to the FdhD family.

It localises to the cytoplasm. Functionally, required for formate dehydrogenase (FDH) activity. Acts as a sulfur carrier protein that transfers sulfur from IscS to the molybdenum cofactor prior to its insertion into FDH. The polypeptide is Sulfur carrier protein FdhD (Bordetella bronchiseptica (strain ATCC BAA-588 / NCTC 13252 / RB50) (Alcaligenes bronchisepticus)).